Consider the following 92-residue polypeptide: Small ribosomal subunit protein uS19 (92 aa).

It belongs to the universal ribosomal protein uS19 family.

Its function is as follows. Protein S19 forms a complex with S13 that binds strongly to the 16S ribosomal RNA. This Novosphingobium aromaticivorans (strain ATCC 700278 / DSM 12444 / CCUG 56034 / CIP 105152 / NBRC 16084 / F199) protein is Small ribosomal subunit protein uS19.